We begin with the raw amino-acid sequence, 192 residues long: Fe/S biogenesis protein NfuA (192 aa).

Residues Cys-149 and Cys-152 each contribute to the [4Fe-4S] cluster site.

This sequence belongs to the NfuA family. Homodimer. [4Fe-4S] cluster serves as cofactor.

Functionally, involved in iron-sulfur cluster biogenesis. Binds a 4Fe-4S cluster, can transfer this cluster to apoproteins, and thereby intervenes in the maturation of Fe/S proteins. Could also act as a scaffold/chaperone for damaged Fe/S proteins. This chain is Fe/S biogenesis protein NfuA, found in Shewanella frigidimarina (strain NCIMB 400).